A 308-amino-acid polypeptide reads, in one-letter code: D-alanine--D-alanine ligase (308 aa).

In terms of domain architecture, ATP-grasp spans 102–302 (KHVAKAAGIP…FGEFLRWMVE (201 aa)). Position 128 to 183 (128 to 183 (PMKPPYVVKPVREGSSFGVVIVKEDQSHPPQVITSSDWRYGDRIMVERYVAGREFT)) interacts with ATP. 3 residues coordinate Mg(2+): Asp-252, Glu-269, and Asn-271.

It belongs to the D-alanine--D-alanine ligase family. The cofactor is Mg(2+). Requires Mn(2+) as cofactor.

The protein resides in the cytoplasm. It catalyses the reaction 2 D-alanine + ATP = D-alanyl-D-alanine + ADP + phosphate + H(+). The protein operates within cell wall biogenesis; peptidoglycan biosynthesis. Cell wall formation. This Sinorhizobium medicae (strain WSM419) (Ensifer medicae) protein is D-alanine--D-alanine ligase.